We begin with the raw amino-acid sequence, 415 residues long: Methylmalonic aciduria type A homolog, mitochondrial (415 aa).

Residues 1–62 constitute a mitochondrion transit peptide; sequence MTISTLLLSP…LLSDGFRRTL (62 aa). Residues 147–155, Asp-289, and 325–327 each bind GTP; these read GPPGAGKST and SAR.

This sequence belongs to the SIMIBI class G3E GTPase family. ArgK/MeaB subfamily. In terms of assembly, homodimer. Interacts with MMUT (the apoenzyme form); the interaction is GTP dependent.

The protein localises to the mitochondrion. It localises to the cytoplasm. It carries out the reaction GTP + H2O = GDP + phosphate + H(+). Its activity is regulated as follows. GTPase activity is stimulated by MMUT. Its function is as follows. GTPase, binds and hydrolyzes GTP. Involved in intracellular vitamin B12 metabolism, mediates the transport of cobalamin (Cbl) into mitochondria for the final steps of adenosylcobalamin (AdoCbl) synthesis. Functions as a G-protein chaperone that assists AdoCbl cofactor delivery from MMAB to the methylmalonyl-CoA mutase (MMUT). Plays a dual role as both a protectase and a reactivase for MMUT. Protects MMUT from progressive inactivation by oxidation by decreasing the rate of the formation of the oxidized inactive cofactor hydroxocobalamin (OH2Cbl). Additionally acts a reactivase by promoting the replacement of OH2Cbl by the active cofactor AdoCbl, restoring the activity of MMUT in the presence and hydrolysis of GTP. This Mus musculus (Mouse) protein is Methylmalonic aciduria type A homolog, mitochondrial.